The sequence spans 465 residues: Glutamate--tRNA ligase 2 (465 aa).

The short motif at Pro-8–Asn-18 is the 'HIGH' region element. A 'KMSKS' region motif is present at residues Pro-249 to Arg-253. Residue Lys-252 participates in ATP binding.

It belongs to the class-I aminoacyl-tRNA synthetase family. Glutamate--tRNA ligase type 1 subfamily. As to quaternary structure, monomer.

Its subcellular location is the cytoplasm. The enzyme catalyses tRNA(Glu) + L-glutamate + ATP = L-glutamyl-tRNA(Glu) + AMP + diphosphate. Its function is as follows. Catalyzes the attachment of glutamate to tRNA(Glu) in a two-step reaction: glutamate is first activated by ATP to form Glu-AMP and then transferred to the acceptor end of tRNA(Glu). The polypeptide is Glutamate--tRNA ligase 2 (Coxiella burnetii (strain CbuK_Q154) (Coxiella burnetii (strain Q154))).